The primary structure comprises 203 residues: CASP-like protein 1B1 (203 aa).

Topologically, residues 1–24 are cytoplasmic; it reads MALVNAEKPEVGSSPSSLGPRNKS. A helical transmembrane segment spans residues 25 to 45; it reads WVLLMLRFVAFLATAAATIVM. At 46–76 the chain is on the extracellular side; sequence AANRETKTFVVATIGSTPIKATVTAKFQHTP. Residues 77 to 97 form a helical membrane-spanning segment; that stretch reads AFVFFVIANGMGSIHNLVMIA. Topologically, residues 98-114 are cytoplasmic; that stretch reads GDTFVRKFDYKGLRWVT. A helical membrane pass occupies residues 115–135; sequence VAILDMLTAALISGGVNAAVF. At 136–165 the chain is on the extracellular side; that stretch reads MAELGKNGNSHAKWNKICDRFGSFCDHGGA. The chain crosses the membrane as a helical span at residues 166–186; it reads AIIASFIGLLLMLVISIISII. The Cytoplasmic portion of the chain corresponds to 187–203; that stretch reads KLLKPKSPLVDSHVLAP.

Belongs to the Casparian strip membrane proteins (CASP) family. Homodimer and heterodimers.

It is found in the cell membrane. The sequence is that of CASP-like protein 1B1 from Ricinus communis (Castor bean).